The following is a 365-amino-acid chain: Poly(rC)-binding protein 2 (365 aa).

KH domains are found at residues 13–75 and 97–162; these read TLTI…FAMI and PVTL…VKQI. Residue lysine 115 forms a Glycyl lysine isopeptide (Lys-Gly) (interchain with G-Cter in SUMO2) linkage. A Phosphoserine modification is found at serine 173. Lysine 185 is covalently cross-linked (Glycyl lysine isopeptide (Lys-Gly) (interchain with G-Cter in SUMO2)). Phosphoserine occurs at positions 189 and 272. Residues 287 to 351 enclose the KH 3 domain; that stretch reads TTSHELTIPN…ASISLAQYLI (65 aa). Lysine 322 is covalently cross-linked (Glycyl lysine isopeptide (Lys-Gly) (interchain with G-Cter in SUMO2)). Phosphoserine is present on residues serine 364 and serine 365.

In terms of assembly, identified in a mRNP complex, at least composed of DHX9, DDX3X, ELAVL1, HNRNPU, IGF2BP1, ILF3, PABPC1, PCBP2, PTBP2, STAU1, STAU2, SYNCRIP and YBX1. Interacts with IFIH1 and RNF135. Interacts with MAVS (via C-terminus) and ITCH (via WW domains). Interacts with CGAS; preventing the formation of liquid-like droplets in which CGAS is activated. In terms of processing, phosphorylated. The non-phosphorylated form(s) exhibited the strongest poly(rC)-binding activity. Post-translationally, (Microbial infection) Proteolytically cleaved by picornavirus proteinase 3CD. In terms of tissue distribution, detected in all tissues examined.

It is found in the nucleus. The protein resides in the cytoplasm. In terms of biological role, single-stranded nucleic acid binding protein that binds preferentially to oligo dC. Major cellular poly(rC)-binding protein. Also binds poly(rU). Acts as a negative regulator of antiviral signaling. Negatively regulates cellular antiviral responses mediated by MAVS signaling. It acts as an adapter between MAVS and the E3 ubiquitin ligase ITCH, therefore triggering MAVS ubiquitination and degradation. Negativeley regulates the cGAS-STING pathway via interaction with CGAS, preventing the formation of liquid-like droplets in which CGAS is activated. Together with PCBP1, required for erythropoiesis, possibly by regulating mRNA splicing. Functionally, (Microbial infection) In case of infection by poliovirus, binds to the viral internal ribosome entry site (IRES) and stimulates the IRES-mediated translation. Also plays a role in initiation of viral RNA replication in concert with the viral protein 3CD. This chain is Poly(rC)-binding protein 2, found in Homo sapiens (Human).